Here is a 111-residue protein sequence, read N- to C-terminus: Large ribosomal subunit protein uL24 (111 aa).

Belongs to the universal ribosomal protein uL24 family. In terms of assembly, part of the 50S ribosomal subunit.

In terms of biological role, one of two assembly initiator proteins, it binds directly to the 5'-end of the 23S rRNA, where it nucleates assembly of the 50S subunit. One of the proteins that surrounds the polypeptide exit tunnel on the outside of the subunit. This is Large ribosomal subunit protein uL24 from Streptococcus pneumoniae (strain Hungary19A-6).